A 391-amino-acid polypeptide reads, in one-letter code: 3-ketoacyl-CoA thiolase (391 aa).

Catalysis depends on C95, which acts as the Acyl-thioester intermediate. Catalysis depends on proton acceptor residues H347 and C377.

This sequence belongs to the thiolase-like superfamily. Thiolase family. As to quaternary structure, heterotetramer of two alpha chains (FadB) and two beta chains (FadA).

It is found in the cytoplasm. The catalysed reaction is an acyl-CoA + acetyl-CoA = a 3-oxoacyl-CoA + CoA. Its pathway is lipid metabolism; fatty acid beta-oxidation. In terms of biological role, catalyzes the final step of fatty acid oxidation in which acetyl-CoA is released and the CoA ester of a fatty acid two carbons shorter is formed. The protein is 3-ketoacyl-CoA thiolase of Pseudomonas aeruginosa (strain UCBPP-PA14).